Reading from the N-terminus, the 272-residue chain is Tryptophan synthase alpha chain (272 aa).

Catalysis depends on proton acceptor residues Glu-49 and Asp-60.

This sequence belongs to the TrpA family. As to quaternary structure, tetramer of two alpha and two beta chains.

The enzyme catalyses (1S,2R)-1-C-(indol-3-yl)glycerol 3-phosphate + L-serine = D-glyceraldehyde 3-phosphate + L-tryptophan + H2O. It participates in amino-acid biosynthesis; L-tryptophan biosynthesis; L-tryptophan from chorismate: step 5/5. Its function is as follows. The alpha subunit is responsible for the aldol cleavage of indoleglycerol phosphate to indole and glyceraldehyde 3-phosphate. The chain is Tryptophan synthase alpha chain from Polaromonas sp. (strain JS666 / ATCC BAA-500).